We begin with the raw amino-acid sequence, 319 residues long: Beta-ketoacyl-[acyl-carrier-protein] synthase III (319 aa).

Residues C110 and H246 contribute to the active site. The segment at 247 to 251 is ACP-binding; it reads QANYR. The active site involves N276.

The protein belongs to the thiolase-like superfamily. FabH family. Homodimer.

Its subcellular location is the cytoplasm. The enzyme catalyses malonyl-[ACP] + acetyl-CoA + H(+) = 3-oxobutanoyl-[ACP] + CO2 + CoA. It participates in lipid metabolism; fatty acid biosynthesis. Functionally, catalyzes the condensation reaction of fatty acid synthesis by the addition to an acyl acceptor of two carbons from malonyl-ACP. Catalyzes the first condensation reaction which initiates fatty acid synthesis and may therefore play a role in governing the total rate of fatty acid production. Possesses both acetoacetyl-ACP synthase and acetyl transacylase activities. Its substrate specificity determines the biosynthesis of branched-chain and/or straight-chain of fatty acids. The protein is Beta-ketoacyl-[acyl-carrier-protein] synthase III of Lactobacillus delbrueckii subsp. bulgaricus (strain ATCC BAA-365 / Lb-18).